The primary structure comprises 318 residues: L-lactate dehydrogenase (318 aa).

NAD(+) contacts are provided by Val15, Asp36, and Lys41. Position 89 (Arg89) interacts with substrate. Residues Ser102, 119-121, and Thr144 each bind NAD(+); that span reads ITN. Residue 121-124 participates in substrate binding; sequence NPVD. Position 149-152 (149-152) interacts with substrate; it reads DSAR. His176 (proton acceptor) is an active-site residue. Thr231 is a binding site for substrate.

Belongs to the LDH/MDH superfamily. LDH family. As to quaternary structure, homotetramer.

It is found in the cytoplasm. It catalyses the reaction (S)-lactate + NAD(+) = pyruvate + NADH + H(+). It functions in the pathway fermentation; pyruvate fermentation to lactate; (S)-lactate from pyruvate: step 1/1. Catalyzes the conversion of lactate to pyruvate. This is L-lactate dehydrogenase from Fusobacterium nucleatum subsp. nucleatum (strain ATCC 25586 / DSM 15643 / BCRC 10681 / CIP 101130 / JCM 8532 / KCTC 2640 / LMG 13131 / VPI 4355).